A 365-amino-acid polypeptide reads, in one-letter code: Glycolaldehyde reductase (365 aa).

NAD(+)-binding residues include Asp-37, Gly-94, Lys-95, Thr-116, Ser-119, Ser-125, Leu-127, and Tyr-131. Residues Asp-171, His-254, and His-271 each contribute to the Zn(2+) site.

It belongs to the iron-containing alcohol dehydrogenase family. Requires Zn(2+) as cofactor.

It catalyses the reaction ethylene glycol + NAD(+) = glycolaldehyde + NADH + H(+). Is subject to substrate inhibition. In terms of biological role, oxidoreductase involved in the non-carboxylating pentose bisphosphate pathway, a nucleoside degradation pathway present in some halophilic archaea. Catalyzes the reduction of glycolaldehyde to ethylene glycol. Cannot catalyze the oxidation of glycerol 1-phosphate nor the reduction of dihydroxyacetone phosphate (DHAP). This is Glycolaldehyde reductase from Halobacterium salinarum (strain ATCC 700922 / JCM 11081 / NRC-1) (Halobacterium halobium).